Consider the following 256-residue polypeptide: Vesicle-associated protein 1-1 (256 aa).

N-acetylmethionine is present on Met-1. Residues 1–232 lie on the Cytoplasmic side of the membrane; it reads MSNIDLIGMS…RRESKKSQSG (232 aa). Position 2 is an N-acetylserine; in Vesicle-associated protein 1-1, N-terminally processed (Ser-2). One can recognise an MSP domain in the interval 22 to 142; it reads LLTVEPLDLQ…EETKLRVTYV (121 aa). The tract at residues 142–169 is disordered; the sequence is VAPPRPPSPVHEGSEEGSSPRASVSDNG. Position 149 is a phosphoserine (Ser-149). Over residues 157 to 169 the composition is skewed to polar residues; it reads EGSSPRASVSDNG. Positions 187–232 form a coiled coil; that stretch reads HQENTSEARALITKLTEEKQSAIQLNNRLQRELDQLRRESKKSQSG. The chain crosses the membrane as a helical; Anchor for type IV membrane protein span at residues 233–253; it reads GIPFMYVLLVGLIGLILGYIM.

It belongs to the VAMP-associated protein (VAP) (TC 9.B.17) family. Homodimer or homooligomer. Interacts with the cowpea mosaic virus (CPMV) NTP-binding protein (NTB). Interacts with NET3C.

The protein resides in the endoplasmic reticulum membrane. Its subcellular location is the protein storage vacuole membrane. Functionally, part of a membrane-cytoskeletal adapter complex that forms a bridge between the endoplasmic reticulum and the plasma membrane. Associates with microtubules. This chain is Vesicle-associated protein 1-1 (PVA11), found in Arabidopsis thaliana (Mouse-ear cress).